Here is a 238-residue protein sequence, read N- to C-terminus: Flagellar L-ring protein (238 aa).

Positions 1–16 (MNKAILAVAMVLLLAG) are cleaved as a signal peptide. Cys-17 is lipidated: N-palmitoyl cysteine. The S-diacylglycerol cysteine moiety is linked to residue Cys-17.

The protein belongs to the FlgH family. The basal body constitutes a major portion of the flagellar organelle and consists of four rings (L,P,S, and M) mounted on a central rod.

It is found in the cell outer membrane. It localises to the bacterial flagellum basal body. Assembles around the rod to form the L-ring and probably protects the motor/basal body from shearing forces during rotation. This chain is Flagellar L-ring protein, found in Brucella canis (strain ATCC 23365 / NCTC 10854 / RM-666).